The primary structure comprises 392 residues: Major outer membrane protein P.IA (392 aa).

Residues 1-19 (MRKKLTALVLSALPLAAVA) form the signal peptide.

Belongs to the Gram-negative porin family. In terms of assembly, homotrimer.

It localises to the cell outer membrane. Its function is as follows. Serves as a slightly cation selective porin. Major antigen on the gonococcal cell surface and it may have pathogenic properties in addition to its porin activity. This is Major outer membrane protein P.IA (porA) from Neisseria meningitidis serogroup B / serotype 15 (strain H44/76).